We begin with the raw amino-acid sequence, 241 residues long: 4-hydroxy-tetrahydrodipicolinate reductase (241 aa).

NAD(+)-binding positions include 80 to 82 (ATT) and 104 to 107 (SANM). Histidine 136 acts as the Proton donor/acceptor in catalysis. Residue histidine 137 coordinates (S)-2,3,4,5-tetrahydrodipicolinate. The active-site Proton donor is the lysine 140. 146 to 147 (GT) contacts (S)-2,3,4,5-tetrahydrodipicolinate.

This sequence belongs to the DapB family.

It localises to the cytoplasm. The enzyme catalyses (S)-2,3,4,5-tetrahydrodipicolinate + NAD(+) + H2O = (2S,4S)-4-hydroxy-2,3,4,5-tetrahydrodipicolinate + NADH + H(+). It carries out the reaction (S)-2,3,4,5-tetrahydrodipicolinate + NADP(+) + H2O = (2S,4S)-4-hydroxy-2,3,4,5-tetrahydrodipicolinate + NADPH + H(+). It participates in amino-acid biosynthesis; L-lysine biosynthesis via DAP pathway; (S)-tetrahydrodipicolinate from L-aspartate: step 4/4. In terms of biological role, catalyzes the conversion of 4-hydroxy-tetrahydrodipicolinate (HTPA) to tetrahydrodipicolinate. This Staphylococcus haemolyticus (strain JCSC1435) protein is 4-hydroxy-tetrahydrodipicolinate reductase.